The sequence spans 148 residues: Large ribosomal subunit protein bL9 (148 aa).

Belongs to the bacterial ribosomal protein bL9 family.

In terms of biological role, binds to the 23S rRNA. This is Large ribosomal subunit protein bL9 from Pseudomonas putida (strain W619).